The sequence spans 527 residues: Homeobox protein NOBOX (527 aa).

4 disordered regions span residues 1-126, 194-245, 271-306, and 488-527; these read MEPT…DLKK, VEKL…DVFP, VTPP…RDVP, and ETGS…GAKE. Residues 136–195 constitute a DNA-binding region (homeobox); that stretch reads RKKTRTLYRSDQLEELERIFQEDHYPDSDKRHEISQMVGVTPQRIMVWFQNRRAKWRKVE. The segment covering 194–203 has biased composition (basic and acidic residues); that stretch reads VEKLNEKETK. Over residues 488 to 506 the composition is skewed to polar residues; that stretch reads ETGSSLSKMSDEQTSSSLE. Residues 511-527 show a composition bias toward basic and acidic residues; sequence EEVRDKNKNSHAAGAKE.

As to expression, specifically expressed in ovaries and testes. In ovaries, expressed in oocytes from primordial through antral follicles but not in granulosa cells, theca cells and corpora lutea.

It localises to the nucleus. Transcription factor which plays an essential role in postnatal follicle development. Binds preferentially to the DNA sequences 5'-TAATTG-3', 5'-TAGTTG-3' and 5'-TAATTA-3'. Directly regulates the transcription of POU5F1 and GDF9 during early folliculogenesis. The chain is Homeobox protein NOBOX (Nobox) from Mus musculus (Mouse).